Reading from the N-terminus, the 251-residue chain is Tungstate/molybdate/chromate-binding protein ModA (251 aa).

An N-terminal signal peptide occupies residues 1–23; the sequence is MTTRLPQLLLALLASAVSLAASA. Residues Thr-60 and Ile-168 each coordinate molybdate.

This sequence belongs to the bacterial solute-binding protein ModA family. In terms of assembly, the complex is composed of two ATP-binding proteins (ModC), two transmembrane proteins (ModB) and a solute-binding protein (ModA).

It localises to the periplasm. Its function is as follows. Part of the ABC transporter complex ModABC involved in the transport of molybdenum into the cell. Binds tungstate and molybdate. Can also bind chromate, with lower affinity. Plays an essential role in recruitment of molybdate for nitrate reduction. In Pseudomonas aeruginosa (strain ATCC 15692 / DSM 22644 / CIP 104116 / JCM 14847 / LMG 12228 / 1C / PRS 101 / PAO1), this protein is Tungstate/molybdate/chromate-binding protein ModA.